The primary structure comprises 131 residues: Protein GLUTAMINE DUMPER 5 (131 aa).

The Extracellular segment spans residues 1–34; it reads MRQFPSIRGNINEKMMTTMVESQTRSPWRTPVPY. A helical membrane pass occupies residues 35 to 55; the sequence is LFGGLAAMLGLIAFALLLLAC. The Cytoplasmic portion of the chain corresponds to 56 to 131; that stretch reads SYWRLSRQTE…GESKVTEENH (76 aa). Residues 88-92 carry the VIMAG motif; that stretch reads VIMAG.

Belongs to the GLUTAMINE DUMPER 1 (TC 9.B.60) family. Expressed in the vascular tissues. Also detected in guard cells.

Its subcellular location is the membrane. Its function is as follows. Probable subunit of an amino acid transporter involved in the regulation of the amino acid metabolism. Stimulates amino acid export by activating nonselective amino acid facilitators. The protein is Protein GLUTAMINE DUMPER 5 (GDU5) of Arabidopsis thaliana (Mouse-ear cress).